The sequence spans 150 residues: 3-hydroxyacyl-[acyl-carrier-protein] dehydratase FabZ (150 aa).

The active site involves histidine 53.

The protein belongs to the thioester dehydratase family. FabZ subfamily.

It is found in the cytoplasm. It catalyses the reaction a (3R)-hydroxyacyl-[ACP] = a (2E)-enoyl-[ACP] + H2O. Functionally, involved in unsaturated fatty acids biosynthesis. Catalyzes the dehydration of short chain beta-hydroxyacyl-ACPs and long chain saturated and unsaturated beta-hydroxyacyl-ACPs. In Proteus mirabilis (strain HI4320), this protein is 3-hydroxyacyl-[acyl-carrier-protein] dehydratase FabZ.